The sequence spans 310 residues: ATP phosphoribosyltransferase (310 aa).

The protein belongs to the ATP phosphoribosyltransferase family.

The protein localises to the cytoplasm. It catalyses the reaction 1-(5-phospho-beta-D-ribosyl)-ATP + diphosphate = 5-phospho-alpha-D-ribose 1-diphosphate + ATP. Its pathway is amino-acid biosynthesis; L-histidine biosynthesis; L-histidine from 5-phospho-alpha-D-ribose 1-diphosphate: step 1/9. Its function is as follows. Catalyzes the condensation of ATP and 5-phosphoribose 1-diphosphate to form N'-(5'-phosphoribosyl)-ATP (PR-ATP). Has a crucial role in the pathway because the rate of histidine biosynthesis seems to be controlled primarily by regulation of HisG enzymatic activity. This chain is ATP phosphoribosyltransferase (his1), found in Schizosaccharomyces pombe (strain 972 / ATCC 24843) (Fission yeast).